The sequence spans 262 residues: Transmembrane protein 106A (262 aa).

Residues 95 to 115 (FVFLAVLICLVTSSFIVFFLF) traverse the membrane as a helical segment.

Belongs to the TMEM106 family. In terms of tissue distribution, expressed in renal cells (at protein level). Expressed in epithelial cells.

It is found in the cell membrane. In terms of biological role, activates macrophages and polarizes them into M1-like macrophages through the activation of the MAPK and NF-kappaB signaling pathway. Upon activation, up-regulates the expression of CD80, CD86, CD69 and MHC II on macrophages, and induces the release of pro-inflammatory cytokines such as TNF, IL1B, IL6, CCL2 and nitric oxide. May play a role in inhibition of proliferation and migration. This is Transmembrane protein 106A (TMEM106A) from Homo sapiens (Human).